Consider the following 430-residue polypeptide: Sesquiterpene synthase 15 (430 aa).

3 residues coordinate Mg(2+): aspartate 182, aspartate 186, and glutamate 335. The DDXXD motif motif lies at 182-186 (DDIYD).

The protein belongs to the terpene synthase family. Tpsa subfamily. Mg(2+) serves as cofactor. The cofactor is Mn(2+).

It functions in the pathway secondary metabolite biosynthesis; terpenoid biosynthesis. Its function is as follows. Sesquiterpene synthase involved in the biosynthesis of volatile compounds. No activity detected with geranyl diphosphate (GPP) and farnesyl diphosphate (FPP) as substrates. This is Sesquiterpene synthase 15 from Solanum lycopersicum (Tomato).